The primary structure comprises 234 residues: MELKSSSNNNILEQLRNGFARFELVSSPTASVSDSISSTSLPASFISTTKGNSYVFFARINSSMNRSPAAKKVEKYAVDRVKGDGRCLFRALVKGMAFNKGITLNPQRERDDADELRMAVKEVICNDPKEREKYKEALVAITVDESLKRFCQRIGRHDFWGGESELLVLSKLCKQPIIVYIPEHEHGRGGGYGPGFIPIQEYGSEFRGGWGKGKTNKNVVRLLYSGRNHYDLLR.

One can recognise an OTU domain in the interval 76 to 234 (YAVDRVKGDG…SGRNHYDLLR (159 aa)). The cys-loop stretch occupies residues 81 to 87 (VKGDGRC). Asp-84 is an active-site residue. Cys-87 acts as the Nucleophile in catalysis. The interval 154-164 (IGRHDFWGGES) is variable-loop. The his-loop stretch occupies residues 224–229 (YSGRNH). The active site involves His-229.

This sequence belongs to the peptidase C85 family.

It carries out the reaction Thiol-dependent hydrolysis of ester, thioester, amide, peptide and isopeptide bonds formed by the C-terminal Gly of ubiquitin (a 76-residue protein attached to proteins as an intracellular targeting signal).. Functionally, hydrolase that can remove conjugated ubiquitin from proteins in vitro and may therefore play an important regulatory role at the level of protein turnover by preventing degradation. Cysteine protease with a preference for 'Lys-63' over 'Lys-48' over 'Met-1' -linked ubiquitin (UB) tetramers (e.g. Ub3 and Ub4) as substrates. Also cleaves RUB-GST fusion. This is OVARIAN TUMOR DOMAIN-containing deubiquitinating enzyme 3 from Arabidopsis thaliana (Mouse-ear cress).